We begin with the raw amino-acid sequence, 565 residues long: Phosphatidylinositol 4-kinase gamma 4 (565 aa).

2 Ubiquitin-like domains span residues 32 to 104 and 109 to 187; these read IVIF…LVVR and RAIS…RPAK. The 286-residue stretch at 257-542 folds into the PI3K/PI4K catalytic domain; sequence GYLPVMSTEG…AILPGTSEET (286 aa). Residues 263–269 form a G-loop region; that stretch reads STEGSGG. Residues 264-270 and Lys-286 contribute to the ATP site; that span reads TEGSGGV. The segment at 291–311 is disordered; that stretch reads EPMAKNNPRGLPLSTDGEGLK. 369-372 is a binding site for ATP; that stretch reads QLFV. Residues 402–410 form a catalytic loop region; sequence ANADRHAGN. The tract at residues 425–451 is activation loop; the sequence is PIDHGYCLPEKFEDCTFEWLYWPQARE. Asp-427 lines the ATP pocket.

This sequence belongs to the PI3/PI4-kinase family. Type II PI4K subfamily. As to quaternary structure, interacts with FTIP1 and RPN10. Specifically expressed in the phloem including companion cells.

The protein resides in the nucleus. It is found in the endoplasmic reticulum. The enzyme catalyses a 1,2-diacyl-sn-glycero-3-phospho-(1D-myo-inositol) + ATP = a 1,2-diacyl-sn-glycero-3-phospho-(1D-myo-inositol 4-phosphate) + ADP + H(+). Functionally, the phosphorylation of phosphatidylinositol (PI) to PI4P is the first committed step in the generation of phosphatidylinositol 4,5-bisphosphate (PIP2), a precursor of the second messenger inositol 1,4,5-trisphosphate (InsP3). Involved in the control of flowering under long day conditions by promoting degradation of FTIP1. Recruits FTIP1 for degradation by the 26S proteasome in leaves, which affects RFT1 transport to the shoot apical meristem (SAM). This is Phosphatidylinositol 4-kinase gamma 4 from Oryza sativa subsp. japonica (Rice).